The primary structure comprises 360 residues: Peptide chain release factor 1 (360 aa).

Gln235 bears the N5-methylglutamine mark.

The protein belongs to the prokaryotic/mitochondrial release factor family. In terms of processing, methylated by PrmC. Methylation increases the termination efficiency of RF1.

The protein resides in the cytoplasm. Peptide chain release factor 1 directs the termination of translation in response to the peptide chain termination codons UAG and UAA. The protein is Peptide chain release factor 1 of Burkholderia ambifaria (strain MC40-6).